Consider the following 559-residue polypeptide: Excitatory amino acid transporter 5 (559 aa).

At 1–16 the chain is on the cytoplasmic side; that stretch reads MVLDAVLARGRTVCKH. Transmembrane regions (helical) follow at residues 17 to 37, 60 to 80, and 94 to 114; these read NGLL…GFFL, MLKM…LASL, and AYYL…VSII. Over 115–215 the chain is Extracellular; sequence HPGGAAQKET…EIVYKSEPGT (101 aa). The N-linked (GlcNAc...) asparagine glycan is linked to N190. A helical transmembrane segment spans residues 216-236; the sequence is SDGMNVLGIVIFSATMGIMLG. An N-linked (GlcNAc...) asparagine glycan is attached at N253. Helical transmembrane passes span 259–279, 298–318, 329–349, 371–391, 413–433, and 456–476; these read IVAV…AGKI, TVVC…YFLI, GVLQ…TLPI, VGAT…AIFI, AASI…VIVL, and FRTM…AHIC.

It belongs to the dicarboxylate/amino acid:cation symporter (DAACS) (TC 2.A.23) family. SLC1A7 subfamily. In terms of assembly, interacts with the PDZ domains of DLG4. As to expression, expressed in retina, located in both cone and rod photoreceptor terminals and in axon terminals of rod bipolar cells.

The protein localises to the photoreceptor inner segment membrane. Its subcellular location is the synaptic cell membrane. It carries out the reaction K(+)(in) + L-glutamate(out) + 3 Na(+)(out) + H(+)(out) = K(+)(out) + L-glutamate(in) + 3 Na(+)(in) + H(+)(in). It catalyses the reaction K(+)(in) + L-aspartate(out) + 3 Na(+)(out) + H(+)(out) = K(+)(out) + L-aspartate(in) + 3 Na(+)(in) + H(+)(in). The catalysed reaction is D-aspartate(out) + K(+)(in) + 3 Na(+)(out) + H(+)(out) = D-aspartate(in) + K(+)(out) + 3 Na(+)(in) + H(+)(in). Its function is as follows. Sodium-dependent, high-affinity amino acid transporter that mediates the uptake of L-glutamate and also L-aspartate and D-aspartate. Functions as a symporter that transports one amino acid molecule together with two or three Na(+) ions and one proton, in parallel with the counter-transport of one K(+) ion. Acts primarily as an inhibitory glutamate-gated chloride channel being a major inhibitory presynaptic receptor at mammalian rod bipolar cell axon terminals. Glutamate binding gates a large Cl(-) conductance that mediates inhibition, affecting visual processing in the retina. This chain is Excitatory amino acid transporter 5, found in Mus musculus (Mouse).